A 282-amino-acid chain; its full sequence is Complement component 1 Q subcomponent-binding protein, mitochondrial (282 aa).

Residues 1–73 (MLPLLRCVPR…PCACGCGCGS (73 aa)) constitute a mitochondrion transit peptide. The C1q binding stretch occupies residues 76-93 (TDGDKAFVDFLSDEIKEE). A Phosphoserine modification is found at Ser-87. The residue at position 91 (Lys-91) is an N6-acetyllysine. The segment at 138 to 164 (SIPPTFDGEEEPSQGQKVEEQEPELTS) is disordered. Residues 168-213 (FVVEVIKNDDGKKALVLDCHYPEDEVGQEDEAESDIFSIREVSFQS) form an interaction with MAVS region. Position 188 is a phosphotyrosine (Tyr-188). Phosphoserine occurs at positions 201 and 205. Thr-214 carries the post-translational modification Phosphothreonine.

This sequence belongs to the MAM33 family. As to quaternary structure, homotrimer; three monomers form a donut-shaped structure with an unusually asymmetric charge distribution on the surface. Interacts with CDK13, HRK, VTN, NFYB, ADRA1B, FOXC1, DDX21, DDX50, NCL, SRSF1, SRSF9 and CDKN2A isoform smARF. Interacts with CD93; the association may represent a cell surface C1q receptor. Interacts with KRT1; the association represents a cell surface kininogen receptor. Interacts with CD209; the interaction is indicative for a C1q:C1QBP:CD209 signaling complex. Interacts with FBL and RRP1; the respective interactions with C1QBP are competitive. Probably associates with the mitoribosome. Interacts with MAVS; the interaction occurs upon viral transfection. Interacts with PPIF. Interacts with U2AF1L4. Interacts with PLEKHN1. Interacts with VGF-derived peptide TLQP-21. Interacts with POLGARF which is produced from an alternative reading frame of the POLG gene; the interaction results in nucleolar localization of C1QBP, probably due to prevention of C1QBP maturation and redirection from mitochondria to nucleoli. Interacts with MRE11 and RAD50; forming the MRC (MRE11-RAD50-C1QBP) complex that inhibits the activity of MRE11. (Microbial infection) Interacts with Rubella virus capsid protein; the interaction occurs in mitochondria. Interacts with Rubella virus protease/methyltransferase p150. In terms of assembly, (Microbial infection) Interacts with Staphylococcus aureus protein A/spa. As to quaternary structure, (Microbial infection) Interacts with Staphylococcus aureus protein A/spa, HIV-1 Tat and HCV core protein. (Microbial infection) Interacts with HIV-1 Tat and HCV core protein. In terms of assembly, (Microbial infection) Interacts with L.monocytogenes internalin B. As to quaternary structure, (Microbial infection) Interacts with Epstein-Barr virus EBNA1. As to expression, expressed on cell surface of peripheral blood cells (at protein level); Surface expression is reported for macrophages and monocyte-derived dendritic cells.

It is found in the mitochondrion matrix. Its subcellular location is the nucleus. The protein resides in the nucleolus. It localises to the cell membrane. The protein localises to the secreted. It is found in the cytoplasm. Its function is as follows. Multifunctional and multicompartmental protein involved in inflammation and infection processes, ribosome biogenesis, protein synthesis in mitochondria, regulation of apoptosis, transcriptional regulation and pre-mRNA splicing. At the cell surface is thought to act as an endothelial receptor for plasma proteins of the complement and kallikrein-kinin cascades. Putative receptor for C1q; specifically binds to the globular 'heads' of C1q thus inhibiting C1; may perform the receptor function through a complex with C1qR/CD93. In complex with cytokeratin-1/KRT1 is a high affinity receptor for kininogen-1/HMWK. Can also bind other plasma proteins, such as coagulation factor XII leading to its autoactivation. May function to bind initially fluid kininogen-1 to the cell membrane. The secreted form may enhance both extrinsic and intrinsic coagulation pathways. It is postulated that the cell surface form requires docking with transmembrane proteins for downstream signaling which might be specific for a cell-type or response. By acting as C1q receptor is involved in chemotaxis of immature dendritic cells and neutrophils and is proposed to signal through CD209/DC-SIGN on immature dendritic cells, through integrin alpha-4/beta-1 during trophoblast invasion of the decidua, and through integrin beta-1 during endothelial cell adhesion and spreading. Signaling involved in inhibition of innate immune response is implicating the PI3K-AKT/PKB pathway. Required for protein synthesis in mitochondria. In mitochondrial translation may be involved in formation of functional 55S mitoribosomes; the function seems to involve its RNA-binding activity. Acts as a RNA modification reader, which specifically recognizes and binds mitochondrial RNAs modified by C5-methylcytosine (m5C) in response to stress, and promotes recruitment of the mitochondrial degradosome complex, leading to their degradation. May be involved in the nucleolar ribosome maturation process; the function may involve the exchange of FBL for RRP1 in the association with pre-ribosome particles. Involved in regulation of RNA splicing by inhibiting the RNA-binding capacity of SRSF1 and its phosphorylation. Is required for the nuclear translocation of splicing factor U2AF1L4. Involved in regulation of CDKN2A- and HRK-mediated apoptosis. Stabilizes mitochondrial CDKN2A isoform smARF. May be involved in regulation of FOXC1 transcriptional activity and NFY/CCAAT-binding factor complex-mediated transcription. May play a role in antibacterial defense as it can bind to cell surface hyaluronan and inhibit Streptococcus pneumoniae hyaluronate lyase. May be involved in modulation of the immune response; ligation by HCV core protein is resulting in suppression of interleukin-12 production in monocyte-derived dendritic cells. Involved in regulation of antiviral response by inhibiting RIGI- and IFIH1-mediated signaling pathways probably involving its association with MAVS after viral infection. Acts as a regulator of DNA repair via homologous recombination by inhibiting the activity of MRE11: interacts with unphosphorylated MRE11 and RAD50 in absence of DNA damage, preventing formation and activity of the MRN complex. Following DNA damage, dissociates from phosphorylated MRE11, allowing formation of the MRN complex. (Microbial infection) Involved in HIV-1 replication, presumably by contributing to splicing of viral RNA. In terms of biological role, (Microbial infection) In infection processes acts as an attachment site for microbial proteins, including Listeria monocytogenes internalin B (InlB) and Staphylococcus aureus protein A. Functionally, (Microbial infection) Involved in replication of Rubella virus. The sequence is that of Complement component 1 Q subcomponent-binding protein, mitochondrial (C1QBP) from Homo sapiens (Human).